A 706-amino-acid polypeptide reads, in one-letter code: Termination factor NPH-I homolog (706 aa).

Residues 62–227 (IGQGENTRGL…VPCFNMLSGR (166 aa)) enclose the Helicase ATP-binding domain. 75-82 (HQMGMGKT) lines the ATP pocket. Residues 168–171 (DEAH) carry the DEAH box motif. The 183-residue stretch at 417-599 (QCLQPLKVLE…HLNSAFRDLL (183 aa)) folds into the Helicase C-terminal domain.

This sequence belongs to the DEAD box helicase family. DEAH subfamily. Part of the viral DNA-directed RNA polymerase that consists of 8 polII-like subunits (RPB1, RPB2, RPB3, RPB5, RPB6, RPB7, RPB9, RPB10), a capping enzyme and a termination factor.

It is found in the virion. Putative DNA-dependent ATPase required for providing the needed energy to achieve the termination of early transcripts. The chain is Termination factor NPH-I homolog from African swine fever virus (isolate Warthog/Namibia/Wart80/1980) (ASFV).